We begin with the raw amino-acid sequence, 214 residues long: Large ribosomal subunit protein uL3 (214 aa).

N5-methylglutamine is present on Q153.

Belongs to the universal ribosomal protein uL3 family. In terms of assembly, part of the 50S ribosomal subunit. Forms a cluster with proteins L14 and L19. Post-translationally, methylated by PrmB.

Its function is as follows. One of the primary rRNA binding proteins, it binds directly near the 3'-end of the 23S rRNA, where it nucleates assembly of the 50S subunit. This chain is Large ribosomal subunit protein uL3, found in Methylobacillus flagellatus (strain ATCC 51484 / DSM 6875 / VKM B-1610 / KT).